A 466-amino-acid polypeptide reads, in one-letter code: Cysteine--tRNA ligase (466 aa).

Cys-28 provides a ligand contact to Zn(2+). A 'HIGH' region motif is present at residues 30 to 40 (PTVYNYIHIGN). Zn(2+) is bound by residues Cys-208, His-233, and Glu-237. Residues 265 to 269 (KMSKS) carry the 'KMSKS' region motif. An ATP-binding site is contributed by Lys-268.

It belongs to the class-I aminoacyl-tRNA synthetase family. Monomer. Requires Zn(2+) as cofactor.

Its subcellular location is the cytoplasm. It catalyses the reaction tRNA(Cys) + L-cysteine + ATP = L-cysteinyl-tRNA(Cys) + AMP + diphosphate. This is Cysteine--tRNA ligase from Staphylococcus aureus (strain Mu3 / ATCC 700698).